A 320-amino-acid chain; its full sequence is Endochitinase (320 aa).

The N-terminal stretch at 1-23 (MKRTLKVSFFILCLLPLFLGSKA) is a signal peptide. The Chitin-binding type-1 domain maps to 24-64 (EQCGSQAGGAVCPNGLCCSKFGFCGSTDPYCGDGCQSQCKS). 7 cysteine pairs are disulfide-bonded: Cys26–Cys41, Cys35–Cys47, Cys40–Cys54, Cys58–Cys62, Cys101–Cys163, Cys175–Cys182, and Cys281–Cys313. Glu145 (proton donor) is an active-site residue.

It belongs to the glycosyl hydrolase 19 family. Chitinase class I subfamily.

It catalyses the reaction Random endo-hydrolysis of N-acetyl-beta-D-glucosaminide (1-&gt;4)-beta-linkages in chitin and chitodextrins.. In terms of biological role, defense against chitin-containing fungal pathogens. This Pisum sativum (Garden pea) protein is Endochitinase.